The sequence spans 708 residues: Solute carrier family 15 member 1 (708 aa).

A helical membrane pass occupies residues 1–21 (MGMSKSHSFFGYPLSIFFIVV). Residues 22–53 (NEFCERFSYYGMRAILILYFTNFISWDDNLST) are Extracellular-facing. N-linked (GlcNAc...) asparagine glycosylation occurs at Asn50. A helical transmembrane segment spans residues 54-74 (AIYHTFVALCYLTPILGALIA). The Cytoplasmic segment spans residues 75–82 (DSWLGKFK). Residues 83–103 (TIVSLSIVYTIGQAVTSVSSI) form a helical membrane-spanning segment. At 104–118 (NDLTDHNHDGTPDSL) the chain is on the extracellular side. A helical transmembrane segment spans residues 119–139 (PVHVVLSLIGLALIALGTGGI). Over 140–161 (KPCVSAFGGDQFEEGQEKQRNR) the chain is Cytoplasmic. Residues 162-182 (FFSIFYLAINAGSLLSTIITP) traverse the membrane as a helical segment. The Extracellular portion of the chain corresponds to 183-198 (MLRVQQCGIHSKQACY). Residues 199–219 (PLAFGVPAALMAVALIVFVLG) form a helical membrane-spanning segment. Residues 220 to 276 (SGMYKKFKPQGNIMGKVAKCIGFAIKNRFRHRSKAFPKREHWLDWAKEKYDERLISQ) are Cytoplasmic-facing. A helical transmembrane segment spans residues 277–297 (IKMVTRVMFLYIPLPMFWALF). Residues 298–327 (DQQGSRWTLQATTMSGKIGALEIQPDQMQT) lie on the Extracellular side of the membrane. A helical membrane pass occupies residues 328–348 (VNAILIVIMVPIFDAVLYPLI). Topologically, residues 349 to 361 (AKCGFNFTSLKKM) are cytoplasmic. A helical transmembrane segment spans residues 362-382 (AVGMVLASMAFVVAAIVQVEI). At 383–584 (DKTLPVFPKG…SANTVNMALQ (202 aa)) the chain is on the extracellular side. Residues 383–584 (DKTLPVFPKG…SANTVNMALQ (202 aa)) are extracellular domain (ECD). 6 N-linked (GlcNAc...) asparagine glycosylation sites follow: Asn404, Asn408, Asn439, Asn509, Asn514, and Asn562. The chain crosses the membrane as a helical span at residues 585–605 (IPQYFLLTCGEVVFSVTGLEF). The Cytoplasmic segment spans residues 606 to 619 (SYSQAPSNMKSVLQ). A helical membrane pass occupies residues 620–640 (AGWLLTVAVGNIIVLIVAGAG). Residues 641–645 (QFSKQ) lie on the Extracellular side of the membrane. Residues 646 to 666 (WAEYILFAALLLVVCVIFAIM) form a helical membrane-spanning segment. The Cytoplasmic portion of the chain corresponds to 667–708 (ARFYTYINPAEIEAQFDEDEKKNRLEKSNPYFMSGANSQKQM).

It belongs to the major facilitator superfamily. Proton-dependent oligopeptide transporter (POT/PTR) (TC 2.A.17) family. In terms of assembly, interacts (via extracellular domain region) with trypsin. Expressed in small intestine.

The protein resides in the apical cell membrane. It catalyses the reaction a dipeptide(out) + H(+)(out) = a dipeptide(in) + H(+)(in). It carries out the reaction an L-amino acid tripeptide(out) + H(+)(out) = an L-amino acid tripeptide(in) + H(+)(in). The enzyme catalyses L-alanyl-L-lysine(out) + H(+)(out) = L-alanyl-L-lysine(in) + H(+)(in). The catalysed reaction is L-alanyl-L-proline(out) + H(+)(out) = L-alanyl-L-proline(in) + H(+)(in). It catalyses the reaction L-alanyl-L-valine(out) + H(+)(out) = L-alanyl-L-valine(in) + H(+)(in). It carries out the reaction carnosine(out) + H(+)(out) = carnosine(in) + H(+)(in). The enzyme catalyses glycyl-L-glutamine(out) + H(+)(out) = glycyl-L-glutamine(in) + H(+)(in). The catalysed reaction is glycyl-L-leucine(out) + H(+)(out) = glycyl-L-leucine(in) + H(+)(in). It catalyses the reaction glycyl-L-proline(out) + H(+)(out) = glycyl-L-proline(in) + H(+)(in). It carries out the reaction glycyl-sarcosine(out) + H(+)(out) = glycyl-sarcosine(in) + H(+)(in). The enzyme catalyses L-leucyl-L-leucine(out) + H(+)(out) = L-leucyl-L-leucine(in) + H(+)(in). The catalysed reaction is L-leucyl-L-proline(out) + H(+)(out) = L-leucyl-L-proline(in) + H(+)(in). It catalyses the reaction L-phenylalanyl-L-leucine(out) + H(+)(out) = L-phenylalanyl-L-leucine(in) + H(+)(in). It carries out the reaction L-phenylalanyl-L-phenylalanine(out) + H(+)(out) = L-phenylalanyl-L-phenylalanine(in) + H(+)(in). The enzyme catalyses L-lysyl-glycine(out) + H(+)(out) = L-lysyl-glycine(in) + H(+)(in). The catalysed reaction is L-tyrosylglycine(out) + H(+)(out) = L-tyrosylglycine(in) + H(+)(in). It catalyses the reaction L-alanyl-L-aspartate(out) + 2 H(+)(out) = L-alanyl-L-aspartate(in) + 2 H(+)(in). It carries out the reaction L-aspartyl-glycine(out) + 2 H(+)(out) = L-aspartyl-glycine(in) + 2 H(+)(in). The enzyme catalyses glycyl-L-aspartate(out) + 2 H(+)(out) = glycyl-L-aspartate(in) + 2 H(+)(in). The catalysed reaction is glycyl-L-glutamate(out) + 2 H(+)(out) = glycyl-L-glutamate(in) + 2 H(+)(in). It catalyses the reaction L-alanyl-L-leucyl-L-alanine(out) + H(+)(out) = L-alanyl-L-leucyl-L-alanine(in) + H(+)(in). It carries out the reaction L-alanyl-L-prolylglycine(out) + H(+)(out) = L-alanyl-L-prolylglycine(in) + H(+)(in). The enzyme catalyses glycylglycyl-L-isoleucine(out) + H(+)(out) = glycylglycyl-L-isoleucine(in) + H(+)(in). The catalysed reaction is glycylglycyl-L-proline(out) + H(+)(out) = glycylglycyl-L-proline(in) + H(+)(in). It catalyses the reaction L-methionyl-L-phenylalanyl-L-methionine(out) + H(+)(out) = L-methionyl-L-phenylalanyl-L-methionine(in) + H(+)(in). It carries out the reaction N-acetyl-D-muramoyl-L-alanyl-D-isoglutamine(out) + 2 H(+)(out) = N-acetyl-D-muramoyl-L-alanyl-D-isoglutamine(in) + 2 H(+)(in). The enzyme catalyses N(alpha)-formyl-L-methionyl-L-leucyl-L-phenylalanine(out) + 2 H(+)(out) = N(alpha)-formyl-L-methionyl-L-leucyl-L-phenylalanine(in) + 2 H(+)(in). Its function is as follows. Electrogenic proton-coupled amino-acid transporter that transports oligopeptides of 2 to 4 amino acids with a preference for dipeptides. Transports neutral and monovalently charged peptides with a proton to peptide stoichiometry of 1:1 or 2:1. Primarily responsible for the absorption of dietary di- and tripeptides from the small intestinal lumen. Mediates transepithelial transport of muramyl and N-formylated bacterial dipeptides contributing to recognition of pathogenic bacteria by the mucosal immune system. This is Solute carrier family 15 member 1 from Homo sapiens (Human).